The sequence spans 312 residues: NAD(P)(+)--arginine ADP-ribosyltransferase 1 (312 aa).

The signal sequence occupies residues 1 to 20 (MELLALRWVLLAGTLLSTSA). A propeptide spanning residues 21-31 (ASSALQEGDLG) is cleaved from the precursor. Intrachain disulfides connect cysteine 51-cysteine 260 and cysteine 159-cysteine 208. The region spanning 71–256 (IAYAVTWRQA…IQLHSKGKMS (186 aa)) is the TR mART core domain. Positions 108, 164, and 183 each coordinate NAD(+). Arginine 164 is a catalytic residue. Serine 186 is a catalytic residue. Serine 217 is a binding site for NAD(+). Glutamate 224 is an active-site residue. The propeptide occupies 267–312 (GGQWGRGHQEVGLGLSPGLSLPVLPCRRRVWEGLGHREGDPIPAAV).

This sequence belongs to the Arg-specific ADP-ribosyltransferase family.

Its subcellular location is the secreted. It localises to the extracellular space. The enzyme catalyses L-arginyl-[protein] + NAD(+) = N(omega)-(ADP-D-ribosyl)-L-arginyl-[protein] + nicotinamide + H(+). The sequence is that of NAD(P)(+)--arginine ADP-ribosyltransferase 1 from Gallus gallus (Chicken).